A 290-amino-acid chain; its full sequence is Endoplasmic reticulum-Golgi intermediate compartment protein 1 (290 aa).

Over 1-26 (MPFDFRRFDIYRKVPKDLTQPTYTGA) the chain is Cytoplasmic. Residues 27-47 (IISICCCLFILFLFLSELTGF) traverse the membrane as a helical segment. The Lumenal segment spans residues 48 to 254 (ITTEVVNELY…RRQPLYRFIT (207 aa)). Asparagine 74 is a glycosylation site (N-linked (GlcNAc...) asparagine). Residues 255 to 275 (TICAIIGGTFTVAGILDSCIF) form a helical membrane-spanning segment. Residues 276-290 (TASEAWKKIQLGKMH) are Cytoplasmic-facing.

This sequence belongs to the ERGIC family. In terms of assembly, may form a heteromeric complex composed of ERGIC1, ERGIC2 and ERGIC3. Within the complex, the interaction with ERGIC3 is direct. Interacts with ERGIC3/ERV46. N-glycosylated.

It localises to the endoplasmic reticulum membrane. It is found in the endoplasmic reticulum-Golgi intermediate compartment membrane. The protein localises to the golgi apparatus membrane. Possible role in transport between endoplasmic reticulum and Golgi. The protein is Endoplasmic reticulum-Golgi intermediate compartment protein 1 (ERGIC1) of Homo sapiens (Human).